The following is a 548-amino-acid chain: uncharacterized protein (548 aa).

One can recognise a DhaL domain in the interval 8 to 200 (KLFADMIIQG…LLCVYEGFLK (193 aa)).

This is an uncharacterized protein from Staphylococcus aureus (strain NCTC 8325 / PS 47).